The following is a 187-amino-acid chain: KS71A fimbrillin (187 aa).

A signal peptide spans 1-21 (MIKSVIAGAVAMAVVSFGANA). Cys-43 and Cys-82 form a disulfide bridge.

The protein belongs to the fimbrial protein family.

Its subcellular location is the fimbrium. Functionally, fimbriae (also called pili), polar filaments radiating from the surface of the bacterium to a length of 0.5-1.5 micrometers and numbering 100-300 per cell, enable bacteria to colonize the epithelium of specific host organs. This chain is KS71A fimbrillin (KS71A), found in Escherichia coli.